Consider the following 202-residue polypeptide: MTTLSDYVDFSQDSFKYAALSIAFNPIFWNVVARAEYRSHFLTRIFGSPYRGCYFLAITIFSLGILRDHIYQQALEDQPYYAPVHQPVLGGALFAVGSVLVLSSMYALGVTGTYLGDYFGILMDAPVTGFPFNVTGSPMYWGSTLNFLGVALYKGKVAGILLTALVFVLYWFALKWEDPFTAEIYAKRERERAKSKRGGKNQ.

Residues 1 to 12 (MTTLSDYVDFSQ) are Lumenal-facing. Positions 13–33 (DSFKYAALSIAFNPIFWNVVA) form an intramembrane region, helical. Topologically, residues 34-45 (RAEYRSHFLTRI) are lumenal. The helical transmembrane segment at 46 to 66 (FGSPYRGCYFLAITIFSLGIL) threads the bilayer. Topologically, residues 67-90 (RDHIYQQALEDQPYYAPVHQPVLG) are cytoplasmic. Residues 91 to 111 (GALFAVGSVLVLSSMYALGVT) form a helical membrane-spanning segment. 95–97 (AVG) is a binding site for S-adenosyl-L-methionine. Over 112–154 (GTYLGDYFGILMDAPVTGFPFNVTGSPMYWGSTLNFLGVALYK) the chain is Lumenal. A helical membrane pass occupies residues 155–175 (GKVAGILLTALVFVLYWFALK). At 176–202 (WEDPFTAEIYAKRERERAKSKRGGKNQ) the chain is on the cytoplasmic side. Residue 177-178 (ED) participates in S-adenosyl-L-methionine binding.

Belongs to the class VI-like SAM-binding methyltransferase superfamily. PEMT/PEM2 methyltransferase family.

The protein resides in the endoplasmic reticulum membrane. It is found in the mitochondrion membrane. It catalyses the reaction a 1,2-diacyl-sn-glycero-3-phospho-N-methylethanolamine + S-adenosyl-L-methionine = a 1,2-diacyl-sn-glycero-3-phospho-N,N-dimethylethanolamine + S-adenosyl-L-homocysteine + H(+). It carries out the reaction a 1,2-diacyl-sn-glycero-3-phospho-N,N-dimethylethanolamine + S-adenosyl-L-methionine = a 1,2-diacyl-sn-glycero-3-phosphocholine + S-adenosyl-L-homocysteine + H(+). The protein operates within phospholipid metabolism; phosphatidylcholine biosynthesis. Catalyzes the second two steps of the methylation pathway of phosphatidylcholine biosynthesis, the SAM-dependent methylation of phosphatidylmonomethylethanolamine (PMME) to phosphatidyldimethylethanolamine (PDME) and of PDME to phosphatidylcholine (PC). The sequence is that of Phosphatidyl-N-methylethanolamine N-methyltransferase from Emericella nidulans (strain FGSC A4 / ATCC 38163 / CBS 112.46 / NRRL 194 / M139) (Aspergillus nidulans).